The following is a 382-amino-acid chain: 2-heptyl-3-hydroxy-4(1H)-quinolone synthase (382 aa).

It belongs to the 3-hydroxybenzoate 6-hydroxylase family.

It catalyses the reaction 2-heptyl-4(1H)-quinolone + NADH + O2 + H(+) = 2-heptyl-3-hydroxy-4(1H)-quinolone + NAD(+) + H2O. Functionally, involved in the terminal step of the biosynthesis of quinolone which in addition to serve as a potent signal for quorum sensing, chelates iron and promotes the formation of membrane vesicles (MVs). Catalyzes the hydroxylation of 2-heptyl-4-quinolone (C7-HHQ) to yield 2-heptyl-3-hydroxy-4-quinolone (PQS). This Pseudomonas aeruginosa (strain ATCC 15692 / DSM 22644 / CIP 104116 / JCM 14847 / LMG 12228 / 1C / PRS 101 / PAO1) protein is 2-heptyl-3-hydroxy-4(1H)-quinolone synthase (pqsH).